The sequence spans 155 residues: SsrA-binding protein (155 aa).

This sequence belongs to the SmpB family.

The protein resides in the cytoplasm. Functionally, required for rescue of stalled ribosomes mediated by trans-translation. Binds to transfer-messenger RNA (tmRNA), required for stable association of tmRNA with ribosomes. tmRNA and SmpB together mimic tRNA shape, replacing the anticodon stem-loop with SmpB. tmRNA is encoded by the ssrA gene; the 2 termini fold to resemble tRNA(Ala) and it encodes a 'tag peptide', a short internal open reading frame. During trans-translation Ala-aminoacylated tmRNA acts like a tRNA, entering the A-site of stalled ribosomes, displacing the stalled mRNA. The ribosome then switches to translate the ORF on the tmRNA; the nascent peptide is terminated with the 'tag peptide' encoded by the tmRNA and targeted for degradation. The ribosome is freed to recommence translation, which seems to be the essential function of trans-translation. This chain is SsrA-binding protein, found in Bordetella bronchiseptica (strain ATCC BAA-588 / NCTC 13252 / RB50) (Alcaligenes bronchisepticus).